A 226-amino-acid chain; its full sequence is Uracil-DNA glycosylase (226 aa).

The Proton acceptor role is filled by Asp64.

This sequence belongs to the uracil-DNA glycosylase (UDG) superfamily. UNG family.

It is found in the cytoplasm. The enzyme catalyses Hydrolyzes single-stranded DNA or mismatched double-stranded DNA and polynucleotides, releasing free uracil.. In terms of biological role, excises uracil residues from the DNA which can arise as a result of misincorporation of dUMP residues by DNA polymerase or due to deamination of cytosine. The polypeptide is Uracil-DNA glycosylase (Vibrio parahaemolyticus serotype O3:K6 (strain RIMD 2210633)).